The chain runs to 98 residues: Large ribosomal subunit protein bL25 (98 aa).

Belongs to the bacterial ribosomal protein bL25 family. As to quaternary structure, part of the 50S ribosomal subunit; part of the 5S rRNA/L5/L18/L25 subcomplex. Contacts the 5S rRNA. Binds to the 5S rRNA independently of L5 and L18.

Its function is as follows. This is one of the proteins that binds to the 5S RNA in the ribosome where it forms part of the central protuberance. The chain is Large ribosomal subunit protein bL25 from Synechocystis sp. (strain ATCC 27184 / PCC 6803 / Kazusa).